We begin with the raw amino-acid sequence, 164 residues long: ATP synthase subunit b (164 aa).

The helical transmembrane segment at 4-24 (LGINPTLFIAQLINFLLLIFI) threads the bilayer.

This sequence belongs to the ATPase B chain family. F-type ATPases have 2 components, F(1) - the catalytic core - and F(0) - the membrane proton channel. F(1) has five subunits: alpha(3), beta(3), gamma(1), delta(1), epsilon(1). F(0) has four main subunits: a(1), b(2) and c(10-14). The alpha and beta chains form an alternating ring which encloses part of the gamma chain. F(1) is attached to F(0) by a central stalk formed by the gamma and epsilon chains, while a peripheral stalk is formed by the delta and b chains.

The protein resides in the cell membrane. Its function is as follows. F(1)F(0) ATP synthase produces ATP from ADP in the presence of a proton or sodium gradient. F-type ATPases consist of two structural domains, F(1) containing the extramembraneous catalytic core and F(0) containing the membrane proton channel, linked together by a central stalk and a peripheral stalk. During catalysis, ATP synthesis in the catalytic domain of F(1) is coupled via a rotary mechanism of the central stalk subunits to proton translocation. Component of the F(0) channel, it forms part of the peripheral stalk, linking F(1) to F(0). This Chloroflexus aurantiacus (strain ATCC 29366 / DSM 635 / J-10-fl) protein is ATP synthase subunit b.